The primary structure comprises 183 residues: Dual-action ribosomal maturation protein DarP (183 aa).

Belongs to the DarP family.

The protein resides in the cytoplasm. Its function is as follows. Member of a network of 50S ribosomal subunit biogenesis factors which assembles along the 30S-50S interface, preventing incorrect 23S rRNA structures from forming. Promotes peptidyl transferase center (PTC) maturation. The polypeptide is Dual-action ribosomal maturation protein DarP (Shigella flexneri serotype 5b (strain 8401)).